Here is a 472-residue protein sequence, read N- to C-terminus: Siroheme synthase (472 aa).

The tract at residues 1–207 (MNFLPIFLDI…GKDQAAKAWL (207 aa)) is precorrin-2 dehydrogenase /sirohydrochlorin ferrochelatase. Residues 22 to 23 (EV) and 43 to 44 (PR) each bind NAD(+). At S132 the chain carries Phosphoserine. Residues 221-472 (GEVYLVGAGP…QPEGNLPGAE (252 aa)) are uroporphyrinogen-III C-methyltransferase. Position 230 (P230) interacts with S-adenosyl-L-methionine. D253 (proton acceptor) is an active-site residue. K275 serves as the catalytic Proton donor. S-adenosyl-L-methionine contacts are provided by residues 306–308 (GGD), I311, 336–337 (TA), M388, and G417.

It in the N-terminal section; belongs to the precorrin-2 dehydrogenase / sirohydrochlorin ferrochelatase family. In the C-terminal section; belongs to the precorrin methyltransferase family.

The enzyme catalyses uroporphyrinogen III + 2 S-adenosyl-L-methionine = precorrin-2 + 2 S-adenosyl-L-homocysteine + H(+). It catalyses the reaction precorrin-2 + NAD(+) = sirohydrochlorin + NADH + 2 H(+). The catalysed reaction is siroheme + 2 H(+) = sirohydrochlorin + Fe(2+). It functions in the pathway cofactor biosynthesis; adenosylcobalamin biosynthesis; precorrin-2 from uroporphyrinogen III: step 1/1. It participates in cofactor biosynthesis; adenosylcobalamin biosynthesis; sirohydrochlorin from precorrin-2: step 1/1. The protein operates within porphyrin-containing compound metabolism; siroheme biosynthesis; precorrin-2 from uroporphyrinogen III: step 1/1. Its pathway is porphyrin-containing compound metabolism; siroheme biosynthesis; siroheme from sirohydrochlorin: step 1/1. It functions in the pathway porphyrin-containing compound metabolism; siroheme biosynthesis; sirohydrochlorin from precorrin-2: step 1/1. Its function is as follows. Multifunctional enzyme that catalyzes the SAM-dependent methylations of uroporphyrinogen III at position C-2 and C-7 to form precorrin-2 via precorrin-1. Then it catalyzes the NAD-dependent ring dehydrogenation of precorrin-2 to yield sirohydrochlorin. Finally, it catalyzes the ferrochelation of sirohydrochlorin to yield siroheme. The chain is Siroheme synthase from Nitrosospira multiformis (strain ATCC 25196 / NCIMB 11849 / C 71).